Consider the following 355-residue polypeptide: Poly(3-hydroxyalkanoate) polymerase subunit PhaC (355 aa).

An AB hydrolase-1 domain is found at 68–333; the sequence is PLLIVYALVN…LAFPGGHIGI (266 aa). The active site involves Cys-148.

Belongs to the PHA/PHB synthase family. Type III PhaC subfamily. Forms a heterodimer with PhaE, which may multimerize in the presence of 3-hydroxybutyryl-CoA.

It localises to the cytoplasm. It carries out the reaction (3R)-3-hydroxybutanoyl-CoA + [(3R)-hydroxybutanoate](n) = [(3R)-hydroxybutanoate](n+1) + CoA. It functions in the pathway biopolymer metabolism; poly-(R)-3-hydroxybutanoate biosynthesis. In terms of biological role, polymerizes D(-)-3-hydroxybutyryl-CoA to create PHB which consists of thousands of hydroxybutyrate molecules linked end to end. PHB serves as an intracellular energy reserve material when cells grow under conditions of nutrient limitation. The sequence is that of Poly(3-hydroxyalkanoate) polymerase subunit PhaC from Thiocystis violacea.